We begin with the raw amino-acid sequence, 239 residues long: Vesicle-associated protein 1-3 (239 aa).

N-acetylmethionine is present on M1. An N-acetylthreonine; in Vesicle-associated protein 1-3, N-terminally processed modification is found at T2. Residues 2-215 (TTGDLVNIHP…RKETSKKQSG (214 aa)) are Cytoplasmic-facing. One can recognise an MSP domain in the interval 6–127 (LVNIHPTELK…EDFKLRVVYI (122 aa)). S133 and S164 each carry phosphoserine. Positions 179–214 (SMISKLTEEKTSATQQSQKLRLELEMLRKETSKKQS) form a coiled coil. A helical; Anchor for type IV membrane protein transmembrane segment spans residues 216–236 (GHSLLLMLLVGLLGCVIGYLL).

The protein belongs to the VAMP-associated protein (VAP) (TC 9.B.17) family.

It localises to the endoplasmic reticulum membrane. Functionally, may play a role in vesicle trafficking. This Arabidopsis thaliana (Mouse-ear cress) protein is Vesicle-associated protein 1-3 (PVA13).